The primary structure comprises 92 residues: UPF0223 protein SUB0967 (92 aa).

Belongs to the UPF0223 family.

This is UPF0223 protein SUB0967 from Streptococcus uberis (strain ATCC BAA-854 / 0140J).